The following is a 229-amino-acid chain: Ribonuclease HII (229 aa).

Residues W34 to T223 enclose the RNase H type-2 domain. Residues D40, E41, and D131 each contribute to the a divalent metal cation site. The disordered stretch occupies residues M209–E229.

The protein belongs to the RNase HII family. It depends on Mn(2+) as a cofactor. Mg(2+) is required as a cofactor.

The protein resides in the cytoplasm. It carries out the reaction Endonucleolytic cleavage to 5'-phosphomonoester.. Endonuclease that specifically degrades the RNA of RNA-DNA hybrids. The protein is Ribonuclease HII of Rhizobium johnstonii (strain DSM 114642 / LMG 32736 / 3841) (Rhizobium leguminosarum bv. viciae).